Reading from the N-terminus, the 560-residue chain is Formate--tetrahydrofolate ligase (560 aa).

Residue 69–76 coordinates ATP; the sequence is TPAGEGKS.

It belongs to the formate--tetrahydrofolate ligase family.

The enzyme catalyses (6S)-5,6,7,8-tetrahydrofolate + formate + ATP = (6R)-10-formyltetrahydrofolate + ADP + phosphate. It functions in the pathway one-carbon metabolism; tetrahydrofolate interconversion. This chain is Formate--tetrahydrofolate ligase, found in Listeria welshimeri serovar 6b (strain ATCC 35897 / DSM 20650 / CCUG 15529 / CIP 8149 / NCTC 11857 / SLCC 5334 / V8).